The sequence spans 399 residues: Bombesin receptor subtype-3 (399 aa).

The Extracellular segment spans residues 1 to 41 (MSQKQPQSPNQTLISITNDTESSSSVVSNDTTNKGWTGDNS). N-linked (GlcNAc...) asparagine glycans are attached at residues asparagine 10 and asparagine 18. Residues 42–63 (PGIEALCAIYITYAVIISVGIL) form a helical membrane-spanning segment. Over 64-82 (GNAILIKVFFKTKSMQTVP) the chain is Cytoplasmic. A helical transmembrane segment spans residues 83 to 103 (NIFITSLALGDLLLLLTCVPV). At 104 to 121 (DATHYLAEGWLFGRIGCK) the chain is on the extracellular side. An intrachain disulfide couples cysteine 120 to cysteine 203. A helical membrane pass occupies residues 122–143 (VLSFIRLTSVGVSVFTLTILSA). Residues 144-163 (DRYKAVVKPLERQPSNAILK) lie on the Cytoplasmic side of the membrane. Residues 164–184 (TCAKAGCIWIMSMIFALPEAI) traverse the membrane as a helical segment. The Extracellular portion of the chain corresponds to 185-220 (FSNVHTLRDPNKNMTSEWCAFYPVSEKLLQEIHALL). A helical membrane pass occupies residues 221-241 (SFLVFYIIPLSIISVYYSLIA). Over 242–272 (RTLYKSTLNIPTEEQSHARKQVESRKRIAKT) the chain is Cytoplasmic. A helical membrane pass occupies residues 273–293 (VLVLVALFALCWLPNHLLNLY). Over 294–313 (HSFTHKAYEDSSAIHFIVTI) the chain is Extracellular. The chain crosses the membrane as a helical span at residues 314-333 (FSRVLAFSNSCVNPFALYWL). The Cytoplasmic segment spans residues 334 to 399 (SKTFQKQFKA…RPMKKEENRV (66 aa)). Cysteine 347 carries the S-palmitoyl cysteine lipid modification.

Belongs to the G-protein coupled receptor 1 family. As to quaternary structure, interacts with C6orf89. In terms of tissue distribution, mainly in uteri of pregnant animals.

It localises to the cell membrane. In terms of biological role, role in sperm cell division, maturation, or function. The relative order of ligand affinity is GRP = neuromedin-C &gt;&gt; neuromedin-B. This receptor mediates its action by association with G proteins that activate a phosphatidylinositol-calcium second messenger system. The sequence is that of Bombesin receptor subtype-3 (BRS3) from Cavia porcellus (Guinea pig).